A 313-amino-acid chain; its full sequence is Olfactory receptor 10G3 (313 aa).

Over 1–25 the chain is Extracellular; that stretch reads MERINSTLLTAFILTGIPYPLRLRT. N-linked (GlcNAc...) asparagine glycosylation is present at asparagine 5. A helical membrane pass occupies residues 26 to 46; the sequence is LFFVFFFLIYILTQLGNLLIL. Over 47–54 the chain is Cytoplasmic; sequence ITVWADPR. Residues 55-76 form a helical membrane-spanning segment; that stretch reads LHARPMYIFLGVLSVIDMSISS. The Extracellular segment spans residues 77 to 100; the sequence is IIVPRLMMNFTLGVKPIPFGGCVA. Asparagine 85 carries N-linked (GlcNAc...) asparagine glycosylation. Cysteine 98 and cysteine 190 are oxidised to a cystine. Residues 101–121 form a helical membrane-spanning segment; it reads QLYFYHFLGSTQCFLYTLMAY. Residues 122–140 lie on the Cytoplasmic side of the membrane; it reads DRYLAICQPLRYPVLMTAK. The helical transmembrane segment at 141-161 threads the bilayer; the sequence is LSALLVAGAWMAGSIHGALQA. Residues 162–198 lie on the Extracellular side of the membrane; sequence ILTFRLPYCGPNQVDYFFCDIPAVLRLACADTTVNEL. A helical transmembrane segment spans residues 199 to 218; the sequence is VTFVDIGVVVASCFSLILLS. Residues 219–238 lie on the Cytoplasmic side of the membrane; that stretch reads YIQIIQAILRIHTADGRRRA. The chain crosses the membrane as a helical span at residues 239–259; the sequence is FSTCGAHVTVVTVYYVPCAFI. Topologically, residues 260–270 are extracellular; that stretch reads YLRPETNSPLD. A helical membrane pass occupies residues 271–291; that stretch reads GAAALVPTAITPFLNPLIYTL. Residues 292–313 lie on the Cytoplasmic side of the membrane; that stretch reads RNQEVKLALKRMLRSPRTPSEV.

This sequence belongs to the G-protein coupled receptor 1 family.

The protein localises to the cell membrane. Functionally, odorant receptor. The chain is Olfactory receptor 10G3 (OR10G3) from Homo sapiens (Human).